The following is a 411-amino-acid chain: Acetylornithine aminotransferase, mitochondrial (411 aa).

Position 262 is an N6-(pyridoxal phosphate)lysine (Lys262).

Belongs to the class-III pyridoxal-phosphate-dependent aminotransferase family. Pyridoxal 5'-phosphate serves as cofactor.

It is found in the mitochondrion matrix. The enzyme catalyses N(2)-acetyl-L-ornithine + 2-oxoglutarate = N-acetyl-L-glutamate 5-semialdehyde + L-glutamate. It functions in the pathway amino-acid biosynthesis; L-arginine biosynthesis; N(2)-acetyl-L-ornithine from L-glutamate: step 4/4. The sequence is that of Acetylornithine aminotransferase, mitochondrial (ARG8) from Yarrowia lipolytica (strain CLIB 122 / E 150) (Yeast).